Here is a 72-residue protein sequence, read N- to C-terminus: UPF0346 protein EF_1680 (72 aa).

Belongs to the UPF0346 family.

The chain is UPF0346 protein EF_1680 from Enterococcus faecalis (strain ATCC 700802 / V583).